A 357-amino-acid chain; its full sequence is Histidinol-phosphate aminotransferase 1 (357 aa).

Lys-217 carries the N6-(pyridoxal phosphate)lysine modification.

Belongs to the class-II pyridoxal-phosphate-dependent aminotransferase family. Histidinol-phosphate aminotransferase subfamily. As to quaternary structure, homodimer. Pyridoxal 5'-phosphate is required as a cofactor.

The enzyme catalyses L-histidinol phosphate + 2-oxoglutarate = 3-(imidazol-4-yl)-2-oxopropyl phosphate + L-glutamate. It participates in amino-acid biosynthesis; L-histidine biosynthesis; L-histidine from 5-phospho-alpha-D-ribose 1-diphosphate: step 7/9. This Burkholderia lata (strain ATCC 17760 / DSM 23089 / LMG 22485 / NCIMB 9086 / R18194 / 383) protein is Histidinol-phosphate aminotransferase 1.